Here is a 528-residue protein sequence, read N- to C-terminus: Tyrosine--tRNA ligase, cytoplasmic (528 aa).

Y39 is a binding site for L-tyrosine. Residues 44-52 (TTGKPHVAY) carry the 'HIGH' region motif. Residues Y166, Q170, D173, and Q188 each coordinate L-tyrosine. The 'KMSKS' region signature appears at 222–226 (KMSSS). A Nuclear localization signal motif is present at residues 242–247 (KKKLKK). Residues 332–362 (EMKKLSNDAYPDASKQKSVPKGSTKNSGTEE) are disordered. One can recognise a tRNA-binding domain in the interval 364 to 468 (DPSLLDLRVG…SGSAPGERIY (105 aa)).

The protein belongs to the class-I aminoacyl-tRNA synthetase family. In terms of assembly, homodimer.

Its subcellular location is the cytoplasm. The protein localises to the nucleus. The enzyme catalyses tRNA(Tyr) + L-tyrosine + ATP = L-tyrosyl-tRNA(Tyr) + AMP + diphosphate + H(+). In terms of biological role, catalyzes the attachment of tyrosine to tRNA(Tyr) in a two-step reaction: tyrosine is first activated by ATP to form Tyr-AMP and then transferred to the acceptor end of tRNA(Tyr). This Xenopus laevis (African clawed frog) protein is Tyrosine--tRNA ligase, cytoplasmic (yars1).